The chain runs to 118 residues: uncharacterized protein (118 aa).

This is an uncharacterized protein from Escherichia coli O157:H7.